A 383-amino-acid chain; its full sequence is Bifunctional enzyme IspD/IspF (383 aa).

The interval 1–226 (MKIAAVIVAA…ERQIMSETIT (226 aa)) is 2-C-methyl-D-erythritol 4-phosphate cytidylyltransferase. Residues 227 to 383 (VTGQGYDVHR…QAIVTARLTT (157 aa)) form a 2-C-methyl-D-erythritol 2,4-cyclodiphosphate synthase region. Residues aspartate 233 and histidine 235 each contribute to the a divalent metal cation site. Residues 233–235 (DVH) and 259–260 (HS) contribute to the 4-CDP-2-C-methyl-D-erythritol 2-phosphate site. Histidine 267 is a binding site for a divalent metal cation. 4-CDP-2-C-methyl-D-erythritol 2-phosphate is bound by residues 281 to 283 (DIG), 357 to 360 (TTTE), phenylalanine 364, and arginine 367.

It in the N-terminal section; belongs to the IspD/TarI cytidylyltransferase family. IspD subfamily. In the C-terminal section; belongs to the IspF family. Requires a divalent metal cation as cofactor.

The catalysed reaction is 2-C-methyl-D-erythritol 4-phosphate + CTP + H(+) = 4-CDP-2-C-methyl-D-erythritol + diphosphate. It catalyses the reaction 4-CDP-2-C-methyl-D-erythritol 2-phosphate = 2-C-methyl-D-erythritol 2,4-cyclic diphosphate + CMP. The protein operates within isoprenoid biosynthesis; isopentenyl diphosphate biosynthesis via DXP pathway; isopentenyl diphosphate from 1-deoxy-D-xylulose 5-phosphate: step 2/6. It participates in isoprenoid biosynthesis; isopentenyl diphosphate biosynthesis via DXP pathway; isopentenyl diphosphate from 1-deoxy-D-xylulose 5-phosphate: step 4/6. Functionally, bifunctional enzyme that catalyzes the formation of 4-diphosphocytidyl-2-C-methyl-D-erythritol from CTP and 2-C-methyl-D-erythritol 4-phosphate (MEP) (IspD), and catalyzes the conversion of 4-diphosphocytidyl-2-C-methyl-D-erythritol 2-phosphate (CDP-ME2P) to 2-C-methyl-D-erythritol 2,4-cyclodiphosphate (ME-CPP) with a corresponding release of cytidine 5-monophosphate (CMP) (IspF). The protein is Bifunctional enzyme IspD/IspF of Maricaulis maris (strain MCS10) (Caulobacter maris).